Here is a 315-residue protein sequence, read N- to C-terminus: Putative olfactory receptor 2I1 (315 aa).

The Extracellular portion of the chain corresponds to 1-24 (MKANYSAEERFLLLGFSDWPSLQP). A helical transmembrane segment spans residues 25 to 48 (VLFALVLLCYLLTLTGNSALVLLA). Topologically, residues 49–56 (VRDPRLHT) are cytoplasmic. Residues 57–78 (PMYYFLCHLALVDAGFTTSVVP) form a helical membrane-spanning segment. The Extracellular segment spans residues 79–99 (PLLANLRGPALWLPRSHCTAQ). A disulfide bridge connects residues Cys96 and Cys188. Residues 100 to 119 (LCASLALGSAECVLLAVMAL) traverse the membrane as a helical segment. Over 120 to 138 (DRAAAVCRPLRYAGLVSPR) the chain is Cytoplasmic. Residues 139-157 (LCRTLASASWLSGLTNSVA) traverse the membrane as a helical segment. Residues 158–195 (QTALLAERPLCAPRLLDHFICELPALLKLACGGDGDTT) lie on the Extracellular side of the membrane. Residues 196–219 (ENQMFAARVVILLLPFAVILASYG) traverse the membrane as a helical segment. Residues 220-236 (AVARAVCCMRFSGGRRR) lie on the Cytoplasmic side of the membrane. The helical transmembrane segment at 237-259 (AVGTCGSHLTAVCLFYGSAIYTY) threads the bilayer. Topologically, residues 260–272 (LQPAQRYNQARGK) are extracellular. Residues 273-292 (FVSLFYTVVTPALNPLIYTL) traverse the membrane as a helical segment. Residues 293–315 (RNKKVKGAARRLLRSLGRGQAGQ) are Cytoplasmic-facing.

This sequence belongs to the G-protein coupled receptor 1 family.

Its subcellular location is the cell membrane. In terms of biological role, odorant receptor. This chain is Putative olfactory receptor 2I1, found in Homo sapiens (Human).